We begin with the raw amino-acid sequence, 541 residues long: Carboxypeptidase Y homolog A (541 aa).

The signal sequence occupies residues 1–17 (MKTFTAALLVGTALAAV). Residues 18–122 (PQQQPLQTQV…KLENYDLRVK (105 aa)) constitute a propeptide that is removed on maturation. Intrachain disulfides connect cysteine 177–cysteine 416, cysteine 311–cysteine 325, cysteine 335–cysteine 358, cysteine 342–cysteine 351, and cysteine 380–cysteine 386. The N-linked (GlcNAc...) asparagine glycan is linked to asparagine 208. The active site involves serine 264. Aspartate 455 is an active-site residue. Asparagine 485, asparagine 491, and asparagine 506 each carry an N-linked (GlcNAc...) asparagine glycan. Residue histidine 517 is part of the active site.

Belongs to the peptidase S10 family.

Its subcellular location is the vacuole. It carries out the reaction Release of a C-terminal amino acid with broad specificity.. Its function is as follows. Vacuolar carboxypeptidase involved in degradation of small peptides. Digests preferentially peptides containing an aliphatic or hydrophobic residue in P1' position, as well as methionine, leucine or phenylalanine in P1 position of ester substrate. In Uncinocarpus reesii (strain UAMH 1704), this protein is Carboxypeptidase Y homolog A (cpyA).